Reading from the N-terminus, the 90-residue chain is Small ribosomal subunit protein bS16 (90 aa).

This sequence belongs to the bacterial ribosomal protein bS16 family.

The polypeptide is Small ribosomal subunit protein bS16 (Geobacillus thermodenitrificans (strain NG80-2)).